Reading from the N-terminus, the 429-residue chain is Enolase (429 aa).

(2R)-2-phosphoglycerate is bound at residue Gln-163. Glu-205 (proton donor) is an active-site residue. The Mg(2+) site is built by Asp-242, Glu-287, and Asp-314. Residues Lys-339, Arg-368, Ser-369, and Lys-390 each contribute to the (2R)-2-phosphoglycerate site. Lys-339 serves as the catalytic Proton acceptor.

Belongs to the enolase family. It depends on Mg(2+) as a cofactor.

It is found in the cytoplasm. The protein localises to the secreted. The protein resides in the cell surface. It carries out the reaction (2R)-2-phosphoglycerate = phosphoenolpyruvate + H2O. The protein operates within carbohydrate degradation; glycolysis; pyruvate from D-glyceraldehyde 3-phosphate: step 4/5. Its function is as follows. Catalyzes the reversible conversion of 2-phosphoglycerate (2-PG) into phosphoenolpyruvate (PEP). It is essential for the degradation of carbohydrates via glycolysis. In Anaeromyxobacter sp. (strain Fw109-5), this protein is Enolase.